The sequence spans 195 residues: NADH-quinone oxidoreductase subunit B (195 aa).

[4Fe-4S] cluster-binding residues include Cys74, Cys75, Cys139, and Cys169.

Belongs to the complex I 20 kDa subunit family. As to quaternary structure, NDH-1 is composed of 14 different subunits. Subunits NuoB, C, D, E, F, and G constitute the peripheral sector of the complex. The cofactor is [4Fe-4S] cluster.

Its subcellular location is the cell inner membrane. It carries out the reaction a quinone + NADH + 5 H(+)(in) = a quinol + NAD(+) + 4 H(+)(out). NDH-1 shuttles electrons from NADH, via FMN and iron-sulfur (Fe-S) centers, to quinones in the respiratory chain. The immediate electron acceptor for the enzyme in this species is believed to be ubiquinone. Couples the redox reaction to proton translocation (for every two electrons transferred, four hydrogen ions are translocated across the cytoplasmic membrane), and thus conserves the redox energy in a proton gradient. This is NADH-quinone oxidoreductase subunit B from Methylobacterium radiotolerans (strain ATCC 27329 / DSM 1819 / JCM 2831 / NBRC 15690 / NCIMB 10815 / 0-1).